The chain runs to 1187 residues: DNA-directed RNA polymerase subunit beta (1187 aa).

Belongs to the RNA polymerase beta chain family. As to quaternary structure, the RNAP catalytic core consists of 2 alpha, 1 beta, 1 beta' and 1 omega subunit. When a sigma factor is associated with the core the holoenzyme is formed, which can initiate transcription.

It carries out the reaction RNA(n) + a ribonucleoside 5'-triphosphate = RNA(n+1) + diphosphate. Its function is as follows. DNA-dependent RNA polymerase catalyzes the transcription of DNA into RNA using the four ribonucleoside triphosphates as substrates. The chain is DNA-directed RNA polymerase subunit beta from Petrotoga mobilis (strain DSM 10674 / SJ95).